The sequence spans 880 residues: Pentatricopeptide repeat-containing protein At3g07290, mitochondrial (880 aa).

Residues 1–89 (MLLIHIRSTR…RSDNDICVRF (89 aa)) constitute a mitochondrion transit peptide. 19 PPR repeats span residues 159–193 (NYPC…GFVV), 194–228 (GMID…GFVL), 229–259 (DSHI…MSKE), 265–299 (NSVS…GCQP), 300–334 (STRT…GCKP), 335–369 (NVHT…RIFP), 370–404 (SVIT…ACKP), 405–439 (NVRT…GLSP), 440–474 (DIVS…DIEP), 475–509 (DCLT…GISL), 510–544 (DEVT…RILT), 545–579 (TPHS…GLVP), 580–614 (SVVT…GCLP), 615–649 (NVYP…GVSP), 650–684 (NHVT…GYEL), 685–721 (NDRI…ETDP), 738–768 (ISGL…VLER), 772–806 (LEKA…GFVP), and 807–842 (SFKS…GVVE).

Belongs to the PPR family. P subfamily.

The protein resides in the mitochondrion. This Arabidopsis thaliana (Mouse-ear cress) protein is Pentatricopeptide repeat-containing protein At3g07290, mitochondrial.